Here is a 267-residue protein sequence, read N- to C-terminus: Adenosine 5'-phosphosulfate reductase (267 aa).

Positions M1 to D29 are disordered. The span at E11 to S25 shows a compositional bias: polar residues. Residues C139, C140, C228, and C231 each contribute to the [4Fe-4S] cluster site. C256 (nucleophile; cysteine thiosulfonate intermediate) is an active-site residue.

Belongs to the PAPS reductase family. CysH subfamily. Requires [4Fe-4S] cluster as cofactor.

The protein resides in the cytoplasm. The catalysed reaction is [thioredoxin]-disulfide + sulfite + AMP + 2 H(+) = adenosine 5'-phosphosulfate + [thioredoxin]-dithiol. The protein operates within sulfur metabolism; hydrogen sulfide biosynthesis; sulfite from sulfate. Catalyzes the formation of sulfite from adenosine 5'-phosphosulfate (APS) using thioredoxin as an electron donor. This is Adenosine 5'-phosphosulfate reductase from Pseudomonas aeruginosa (strain LESB58).